The sequence spans 634 residues: Probable potassium transport system protein Kup 2 (634 aa).

Transmembrane regions (helical) follow at residues 15 to 35 (LTLGAIGVVYGDIGTSPLYAF), 55 to 75 (VLSLALWALIIVVTLKYVIFL), 101 to 121 (WVAVTLLGATGAALFYGDAII), 142 to 162 (GMSQTAIIGVTVGILAALFMF), 173 to 193 (LFGPVCLVWFVALAGLGLWHI), 208 to 228 (AVTFLVSHGVTGLFVLGAVFL), 252 to 272 (WLSFVWPALTLNYLGQGALAL), 303 to 323 (LVILATLATIIASQAVITGAY), 351 to 371 (IYMPGVNWLLLGGVLLLVLGF), 381 to 401 (YGIAVTGTMVVTTCMAFLIAW), 408 to 428 (PVWTALLIAPFLALDLFFFGA), and 435 to 455 (EGGWVPLLVAGLVGLVIFTWL).

It belongs to the HAK/KUP transporter (TC 2.A.72) family.

The protein resides in the cell inner membrane. The enzyme catalyses K(+)(in) + H(+)(in) = K(+)(out) + H(+)(out). Its function is as follows. Transport of potassium into the cell. Likely operates as a K(+):H(+) symporter. This Novosphingobium aromaticivorans (strain ATCC 700278 / DSM 12444 / CCUG 56034 / CIP 105152 / NBRC 16084 / F199) protein is Probable potassium transport system protein Kup 2.